Consider the following 48-residue polypeptide: ATP synthase protein 8 (48 aa).

The helical transmembrane segment at 12 to 32 threads the bilayer; sequence LLTGGILAISLLLYFVATYLL.

This sequence belongs to the ATPase protein 8 family. In terms of assembly, F-type ATPases have 2 components, CF(1) - the catalytic core - and CF(0) - the membrane proton channel.

The protein resides in the mitochondrion membrane. Mitochondrial membrane ATP synthase (F(1)F(0) ATP synthase or Complex V) produces ATP from ADP in the presence of a proton gradient across the membrane which is generated by electron transport complexes of the respiratory chain. F-type ATPases consist of two structural domains, F(1) - containing the extramembraneous catalytic core and F(0) - containing the membrane proton channel, linked together by a central stalk and a peripheral stalk. During catalysis, ATP synthesis in the catalytic domain of F(1) is coupled via a rotary mechanism of the central stalk subunits to proton translocation. Part of the complex F(0) domain. Minor subunit located with subunit a in the membrane. This is ATP synthase protein 8 (ATP8) from Candida parapsilosis (Yeast).